A 104-amino-acid chain; its full sequence is Small ribosomal subunit protein uS10 (104 aa).

This sequence belongs to the universal ribosomal protein uS10 family. As to quaternary structure, part of the 30S ribosomal subunit.

Involved in the binding of tRNA to the ribosomes. This chain is Small ribosomal subunit protein uS10, found in Xanthomonas oryzae pv. oryzae (strain MAFF 311018).